Consider the following 111-residue polypeptide: Universal stress protein B (111 aa).

2 consecutive transmembrane segments (helical) span residues 1–21 (MIST…NMAR) and 90–110 (FLLT…MMMW).

Belongs to the universal stress protein B family.

The protein resides in the cell inner membrane. This chain is Universal stress protein B, found in Pectobacterium atrosepticum (strain SCRI 1043 / ATCC BAA-672) (Erwinia carotovora subsp. atroseptica).